We begin with the raw amino-acid sequence, 205 residues long: N-(5'-phosphoribosyl)anthranilate isomerase (205 aa).

Belongs to the TrpF family.

The catalysed reaction is N-(5-phospho-beta-D-ribosyl)anthranilate = 1-(2-carboxyphenylamino)-1-deoxy-D-ribulose 5-phosphate. It functions in the pathway amino-acid biosynthesis; L-tryptophan biosynthesis; L-tryptophan from chorismate: step 3/5. In Acidithiobacillus ferrooxidans (strain ATCC 23270 / DSM 14882 / CIP 104768 / NCIMB 8455) (Ferrobacillus ferrooxidans (strain ATCC 23270)), this protein is N-(5'-phosphoribosyl)anthranilate isomerase.